Here is a 208-residue protein sequence, read N- to C-terminus: MVSGRVQALLEQLRAQGIRDELVLNALAAVPREKFIDEAFEHKAWENIALPIGQGQTISQPYMVARMTELLELTPQSRVLEIGTGSGYQTAILAHLVHHVCSVERIKGLQWQARRRLKQLDLHNVSTRHGDGWQGWQARAPFDAIIVTAAPPEIPTALMAQLDEGGILVLPVGDEQQFLKRVRRRGGEFIIDTVEAVRFVPLVKGELA.

Residue Ser59 is part of the active site.

Belongs to the methyltransferase superfamily. L-isoaspartyl/D-aspartyl protein methyltransferase family.

The protein resides in the cytoplasm. The enzyme catalyses [protein]-L-isoaspartate + S-adenosyl-L-methionine = [protein]-L-isoaspartate alpha-methyl ester + S-adenosyl-L-homocysteine. Catalyzes the methyl esterification of L-isoaspartyl residues in peptides and proteins that result from spontaneous decomposition of normal L-aspartyl and L-asparaginyl residues. It plays a role in the repair and/or degradation of damaged proteins. This is Protein-L-isoaspartate O-methyltransferase from Salmonella paratyphi A (strain ATCC 9150 / SARB42).